The sequence spans 243 residues: Carboxy-S-adenosyl-L-methionine synthase (243 aa).

Residues Tyr-40, 65 to 67, 90 to 91, 118 to 119, Asn-133, and Arg-200 each bind S-adenosyl-L-methionine; these read GCS, DN, and DI.

This sequence belongs to the class I-like SAM-binding methyltransferase superfamily. Cx-SAM synthase family. Homodimer.

The catalysed reaction is prephenate + S-adenosyl-L-methionine = carboxy-S-adenosyl-L-methionine + 3-phenylpyruvate + H2O. Functionally, catalyzes the conversion of S-adenosyl-L-methionine (SAM) to carboxy-S-adenosyl-L-methionine (Cx-SAM). This Shewanella baltica (strain OS155 / ATCC BAA-1091) protein is Carboxy-S-adenosyl-L-methionine synthase.